The chain runs to 74 residues: ATP synthase subunit c (74 aa).

2 consecutive transmembrane segments (helical) span residues 8-28 (FIGI…VSNI) and 52-72 (IGAG…MLLI).

Belongs to the ATPase C chain family. F-type ATPases have 2 components, F(1) - the catalytic core - and F(0) - the membrane proton channel. F(1) has five subunits: alpha(3), beta(3), gamma(1), delta(1), epsilon(1). F(0) has three main subunits: a(1), b(2) and c(10-14). The alpha and beta chains form an alternating ring which encloses part of the gamma chain. F(1) is attached to F(0) by a central stalk formed by the gamma and epsilon chains, while a peripheral stalk is formed by the delta and b chains.

It localises to the cell inner membrane. Functionally, f(1)F(0) ATP synthase produces ATP from ADP in the presence of a proton or sodium gradient. F-type ATPases consist of two structural domains, F(1) containing the extramembraneous catalytic core and F(0) containing the membrane proton channel, linked together by a central stalk and a peripheral stalk. During catalysis, ATP synthesis in the catalytic domain of F(1) is coupled via a rotary mechanism of the central stalk subunits to proton translocation. In terms of biological role, key component of the F(0) channel; it plays a direct role in translocation across the membrane. A homomeric c-ring of between 10-14 subunits forms the central stalk rotor element with the F(1) delta and epsilon subunits. The protein is ATP synthase subunit c of Rickettsia prowazekii (strain Madrid E).